The following is an 83-amino-acid chain: Large ribosomal subunit protein eL37 (83 aa).

4 residues coordinate Zn(2+): cysteine 19, cysteine 22, cysteine 34, and cysteine 37. Residues 19 to 37 (CRRCGRNSYHVQWERCAAC) form a C4-type zinc finger.

Belongs to the eukaryotic ribosomal protein eL37 family. Zn(2+) is required as a cofactor.

Functionally, binds to the 23S rRNA. The polypeptide is Large ribosomal subunit protein eL37 (RPL37) (Leishmania donovani).